Consider the following 874-residue polypeptide: Probable inorganic carbon transporter subunit DabA (874 aa).

Residues cysteine 398, aspartate 400, histidine 580, and cysteine 595 each contribute to the Zn(2+) site.

The protein belongs to the inorganic carbon transporter (TC 9.A.2) DabA family. Forms a complex with DabB. It depends on Zn(2+) as a cofactor.

Its subcellular location is the cell membrane. Functionally, part of an energy-coupled inorganic carbon pump. The polypeptide is Probable inorganic carbon transporter subunit DabA (Bacillus cytotoxicus (strain DSM 22905 / CIP 110041 / 391-98 / NVH 391-98)).